We begin with the raw amino-acid sequence, 209 residues long: MGKKKRSASSSRWLNEHFKDPFVQKAHKQKLRSRAYFKLDEIQQSDRLFKHGMTVVDLGAAPGGWSQYAIRQIGDLGRVIACDILEMDPIVGVDFLQGDFRDENVLQALLERVGEKKVDVVMSDMAPNFSGMPAVDIPRAMYLVELALDMCKQVLATNGCFVVKVFQGEGFDDYLKEIRSLFNTVKVRKPEASRGRSREVYIVAMGYMG.

Residues G63, W65, D83, D99, and D124 each coordinate S-adenosyl-L-methionine. The Proton acceptor role is filled by K164. In terms of domain architecture, TRAM spans E191–G209.

The protein belongs to the class I-like SAM-binding methyltransferase superfamily. RNA methyltransferase RlmE family.

Its subcellular location is the cytoplasm. It catalyses the reaction uridine(2552) in 23S rRNA + S-adenosyl-L-methionine = 2'-O-methyluridine(2552) in 23S rRNA + S-adenosyl-L-homocysteine + H(+). In terms of biological role, specifically methylates the uridine in position 2552 of 23S rRNA at the 2'-O position of the ribose in the fully assembled 50S ribosomal subunit. The protein is Ribosomal RNA large subunit methyltransferase E of Histophilus somni (strain 129Pt) (Haemophilus somnus).